We begin with the raw amino-acid sequence, 670 residues long: MAAATTTTTTSSSISFSTKPSPSSSKSPLPISRFSLPFSLNPNKSSSSSRRRGIKSSSPSSISAVLNTTTNVTTTPSPTKPTKPETFISRFAPDQPRKGADILVEALERQGVETVFAYPGGASMEIHQALTRSSSIRNVLPRHEQGGVFAAEGYARSSGKPGICIATSGPGATNLVSGLADALLDSVPLVAITGQVPRRMIGTDAFQETPIVEVTRSITKHNYLVMDVEDIPRIIEEAFFLATSGRPGPVLVDVPKDIQQQLAIPNWEQAMRLPGYMSRMPKPPEDSHLEQIVRLISESKKPVLYVGGGCLNSSDELGRFVELTGIPVASTLMGLGSYPCDDELSLHMLGMHGTVYANYAVEHSDLLLAFGVRFDDRVTGKLEAFASRAKIVHIDIDSAEIGKNKTPHVSVCGDVKLALQGMNKVLENRAEELKLDFGVWRNELNVQKQKFPLSFKTFGEAIPPQYAIKVLDELTDGKAIISTGVGQHQMWAAQFYNYKKPRQWLSSGGLGAMGFGLPAAIGASVANPDAIVVDIDGDGSFIMNVQELATIRVENLPVKVLLLNNQHLGMVMQWEDRFYKANRAHTFLGDPAQEDEIFPNMLLFAAACGIPAARVTKKADLREAIQTMLDTPGPYLLDVICPHQEHVLPMIPSGGTFNDVITEGDGRIKY.

2 stretches are compositionally biased toward low complexity: residues Met1–Ser48 and Lys55–Ser77. Residues Met1 to Lys55 constitute a chloroplast transit peptide. Residues Met1–Asp94 are disordered. Glu144 serves as a coordination point for thiamine diphosphate. Residue Ser186 coordinates FAD. Gln207 is a binding site for thiamine diphosphate. The (R)-imazaquin site is built by Lys220 and Arg246. Arg246 provides a ligand contact to FAD. Lys256 contacts chlorimuron-ethyl. Residues Gly308 and Thr331–Leu332 contribute to the FAD site. Cys340 bears the Cysteine sulfinic acid (-SO2H) mark. FAD contacts are provided by residues Leu349–His352 and Gly371–Asp375. Asp376–Arg377 contributes to the chlorimuron-ethyl binding site. FAD is bound by residues Asp395–Ile396 and Asp414–Val415. A coiled-coil region spans residues Asp414–Val446. Gln487–His488 is a thiamine diphosphate binding site. Gly508 to Gly509 serves as a coordination point for FAD. Residues Gly511 to Met513, Asp538 to Ser540, and Asn565 to Met570 each bind thiamine diphosphate. The Mg(2+) site is built by Asp538, Asn565, and His567. Positions 574 and 653 each coordinate chlorimuron-ethyl.

Belongs to the TPP enzyme family. In terms of assembly, homodimer or homotetramer. The acetolactate synthase complex contains both large catalytic subunits and small regulatory subunits. Homodimer. The acetolactate synthase complex contains 4 homodimers of the large catalytic subunits, and 1 homotetramer of the small regulatory subunits. It depends on Mg(2+) as a cofactor. The cofactor is FAD. Thiamine diphosphate serves as cofactor.

The protein localises to the plastid. The protein resides in the chloroplast. The enzyme catalyses 2 pyruvate + H(+) = (2S)-2-acetolactate + CO2. The protein operates within amino-acid biosynthesis; L-isoleucine biosynthesis; L-isoleucine from 2-oxobutanoate: step 1/4. It functions in the pathway amino-acid biosynthesis; L-valine biosynthesis; L-valine from pyruvate: step 1/4. Its activity is regulated as follows. Inhibited by asymmetric aryl disulfides, triazolopyrimidine sulfonanilide compounds, isatin derivatives, and sulfonylurea and imidazolinone herbicides. Insensitive to feed-back inhibition by branched-chain amino acids. Its function is as follows. Catalyzes the formation of acetolactate from pyruvate, the first step in valine and isoleucine biosynthesis. In Arabidopsis thaliana (Mouse-ear cress), this protein is Acetolactate synthase, chloroplastic (ALS).